A 420-amino-acid chain; its full sequence is MVEQDPYEIVIKQLERAAQYMEISEEALEFLKRPQRIVEVTIPVEMDDGSVKVFTGFRVQHNWARGPTKGGIRWHPEETLSTVKALAAWMTWKTAVMDLPYGGGKGGIIVDPKKLSDREKERLARGYIRAIYDVISPYEDIPAPDVYTNPQIMAWMMDEYETISRRKTPAFGIITGKPLSIGGSLGRIEATARGASYTIREAAKVLGWDTLKGKTIAIQGYGNAGYYLAKIMSEDFGMKVVAVSDSKGGIYNPDGLNADEVLKWKNEHGSVKDFPGATNITNEELLELEVDVLAPAAIEEVITKKNADNIKAKIVAEVANGPVTPEADEILFEKGILQIPDFLCNAGGVTVSYFEWVQNITGYYWTIEEVRERLDKKMTKAFYDVYNIAKEKNIHMRDAAYVVAVQRVYQAMLDRGWVKH.

The active site involves Lys105. 220–226 (GYGNAGY) provides a ligand contact to NAD(+).

This sequence belongs to the Glu/Leu/Phe/Val dehydrogenases family. In terms of assembly, homohexamer.

Its subcellular location is the cytoplasm. It carries out the reaction L-glutamate + NAD(+) + H2O = 2-oxoglutarate + NH4(+) + NADH + H(+). It catalyses the reaction L-glutamate + NADP(+) + H2O = 2-oxoglutarate + NH4(+) + NADPH + H(+). In Pyrococcus furiosus (strain ATCC 43587 / DSM 3638 / JCM 8422 / Vc1), this protein is Glutamate dehydrogenase (gdhA).